The sequence spans 221 residues: SIN3-HDAC complex-associated factor (221 aa).

Residues 112-121 (QKEFKRHNSD) are compositionally biased toward basic and acidic residues. 2 disordered regions span residues 112-152 (QKEF…MASG) and 201-221 (AAAEKPEEQGPEPLPISTQEW). Over residues 124-135 (STTSSASPAQSP) the composition is skewed to low complexity. The span at 136–152 (CYSNQSDDGSDTEMASG) shows a compositional bias: polar residues.

It belongs to the SINHCAF family. Interacts with the Sin3/HDAC corepressor complex at least composed of BRMS1, BRMS1L, ING2, SAP30, SAP30L and HDAC1. Found in a complex composed of at least SINHCAF, SIN3A, HDAC1, SAP30, RBBP4, OGT and TET1. Interacts with SIN3A and OGT.

Its subcellular location is the nucleus. Functionally, subunit of the Sin3 deacetylase complex (Sin3/HDAC), this subunit is important for the repression of genes encoding components of the TGF-beta signaling pathway. Core component of a SIN3A complex (composed of at least SINHCAF, SIN3A, HDAC1, SAP30, RBBP4, OGT and TET1) present in embryonic stem (ES) cells. Promotes the stability of SIN3A and its presence on chromatin and is essential for maintaining the potential of ES cells to proliferate rapidly, while ensuring a short G1-phase of the cell cycle, thereby preventing premature lineage priming. In Homo sapiens (Human), this protein is SIN3-HDAC complex-associated factor.